The following is a 37-amino-acid chain: Large ribosomal subunit protein bL36B (37 aa).

This sequence belongs to the bacterial ribosomal protein bL36 family.

The sequence is that of Large ribosomal subunit protein bL36B from Kineococcus radiotolerans (strain ATCC BAA-149 / DSM 14245 / SRS30216).